The sequence spans 91 residues: Small membrane A-kinase anchor protein (91 aa).

Residue Gly-2 is the site of N-myristoyl glycine attachment.

The protein belongs to the small membrane AKAP family. May be palmitoylated at Cys-3.

Its subcellular location is the cell membrane. Functionally, binds to type I regulatory subunits of protein kinase A and may anchor/target them to the plasma membrane. This is Small membrane A-kinase anchor protein from Xenopus laevis (African clawed frog).